We begin with the raw amino-acid sequence, 206 residues long: Small ribosomal subunit protein uS4 (206 aa).

The S4 RNA-binding domain occupies 96–156 (GRLDNVVYRM…EKAKKQSRVK (61 aa)).

It belongs to the universal ribosomal protein uS4 family. In terms of assembly, part of the 30S ribosomal subunit. Contacts protein S5. The interaction surface between S4 and S5 is involved in control of translational fidelity.

In terms of biological role, one of the primary rRNA binding proteins, it binds directly to 16S rRNA where it nucleates assembly of the body of the 30S subunit. Functionally, with S5 and S12 plays an important role in translational accuracy. The protein is Small ribosomal subunit protein uS4 of Serratia proteamaculans (strain 568).